The sequence spans 337 residues: DNA-directed RNA polymerase subunit alpha (337 aa).

Residues 1–233 form an alpha N-terminal domain (alpha-NTD) region; the sequence is MIQKNWQELI…DQLAIFVNFE (233 aa). The tract at residues 249 to 337 is alpha C-terminal domain (alpha-CTD); sequence FNPALLKKVD…DLAKRYEDQY (89 aa).

It belongs to the RNA polymerase alpha chain family. In terms of assembly, homodimer. The RNAP catalytic core consists of 2 alpha, 1 beta, 1 beta' and 1 omega subunit. When a sigma factor is associated with the core the holoenzyme is formed, which can initiate transcription.

The enzyme catalyses RNA(n) + a ribonucleoside 5'-triphosphate = RNA(n+1) + diphosphate. In terms of biological role, DNA-dependent RNA polymerase catalyzes the transcription of DNA into RNA using the four ribonucleoside triphosphates as substrates. The sequence is that of DNA-directed RNA polymerase subunit alpha from Brucella anthropi (strain ATCC 49188 / DSM 6882 / CCUG 24695 / JCM 21032 / LMG 3331 / NBRC 15819 / NCTC 12168 / Alc 37) (Ochrobactrum anthropi).